Consider the following 110-residue polypeptide: U1-lycotoxin-Ls1bb (110 aa).

The signal sequence occupies residues 1–20; sequence MKFVLLFGVLLVTLFSYSSA. Positions 21 to 44 are excised as a propeptide; the sequence is EMLDDFDQADEDELLSLIEKEEAR. 4 cysteine pairs are disulfide-bonded: Cys47-Cys62, Cys54-Cys71, Cys61-Cys89, and Cys73-Cys87.

This sequence belongs to the neurotoxin 19 (CSTX) family. 03 subfamily. Expressed by the venom gland.

It localises to the secreted. This is U1-lycotoxin-Ls1bb from Lycosa singoriensis (Wolf spider).